The sequence spans 354 residues: Uroporphyrinogen decarboxylase (354 aa).

Residues 27–31, aspartate 77, tyrosine 154, threonine 209, and histidine 327 each bind substrate; that span reads RQAGR.

It belongs to the uroporphyrinogen decarboxylase family. Homodimer.

Its subcellular location is the cytoplasm. The catalysed reaction is uroporphyrinogen III + 4 H(+) = coproporphyrinogen III + 4 CO2. The protein operates within porphyrin-containing compound metabolism; protoporphyrin-IX biosynthesis; coproporphyrinogen-III from 5-aminolevulinate: step 4/4. Catalyzes the decarboxylation of four acetate groups of uroporphyrinogen-III to yield coproporphyrinogen-III. This chain is Uroporphyrinogen decarboxylase, found in Cronobacter sakazakii (strain ATCC BAA-894) (Enterobacter sakazakii).